A 189-amino-acid chain; its full sequence is Probable chorismate pyruvate-lyase (189 aa).

Residues Arg77, Leu115, and Glu174 each coordinate substrate.

This sequence belongs to the UbiC family.

It localises to the cytoplasm. It carries out the reaction chorismate = 4-hydroxybenzoate + pyruvate. The protein operates within cofactor biosynthesis; ubiquinone biosynthesis. Functionally, removes the pyruvyl group from chorismate, with concomitant aromatization of the ring, to provide 4-hydroxybenzoate (4HB) for the ubiquinone pathway. The chain is Probable chorismate pyruvate-lyase from Shewanella sp. (strain MR-7).